A 63-amino-acid chain; its full sequence is Male accessory gland serine protease inhibitor (63 aa).

Positions 6–62 (CGEPHSLDGSPNGISCRGYFPSWSYNPDAQQCVSFVYGGCGGNNNRFGSQNECEERC) constitute a BPTI/Kunitz inhibitor domain. 3 disulfide bridges follow: Cys6–Cys62, Cys21–Cys45, and Cys37–Cys58.

Functionally, serine protease inhibitor. This peptide can inhibit, in-vivo, acrosin and, to a lower level, plasma kallikrein. It probably plays a role in Drosophila reproduction. This is Male accessory gland serine protease inhibitor (PapD) from Drosophila funebris (Fruit fly).